We begin with the raw amino-acid sequence, 199 residues long: uncharacterized protein (199 aa).

The next 7 helical transmembrane spans lie at 10-32 (LTSQAAVLTSLVVIGLILCFIGY), 37-59 (VYSAVIGLFIGQLVGIYITINYY), 63-80 (LIVILASAIVGALLFALI), 83-100 (LGLIVTGAAFGYFVGVYL), 104-121 (YQVYAFVLAALFALINLF), 126-148 (LTVLITSVIGASAIALAVHMGIT), and 163-185 (FDAIFSNAYFDLLWFTLVLTGII).

It localises to the cell membrane. This is an uncharacterized protein from Archaeoglobus fulgidus (strain ATCC 49558 / DSM 4304 / JCM 9628 / NBRC 100126 / VC-16).